Here is a 171-residue protein sequence, read N- to C-terminus: Glycine cleavage system H protein 4 (171 aa).

A Lipoyl-binding domain is found at 30 to 112 (FAEVGITDYA…YEAGWIAVIE (83 aa)). Lysine 71 is subject to N6-lipoyllysine. Residues 139–171 (EKEEEVEVKEEELIETESIEELSEEELGYEENK) are disordered.

The protein belongs to the GcvH family. As to quaternary structure, the glycine cleavage system is composed of four proteins: P, T, L and H. The cofactor is (R)-lipoate.

In terms of biological role, the glycine cleavage system catalyzes the degradation of glycine. The H protein shuttles the methylamine group of glycine from the P protein to the T protein. This Aquifex aeolicus (strain VF5) protein is Glycine cleavage system H protein 4.